The sequence spans 366 residues: MRPDQIQPEMYEKQLQDKQAELAKLMATLSLPEMEVFASQPTHYRMRAEFRIWHDGDDLYYAMFDSADPRTPIRTDQFLAASRLINELMPKLLDAVRDVPVLRYKLFQVDFLTTTTGEALISLLYHKPIDAEWNAAVQQLNNAFPACHFIGRSRKKKQIITRDFVMETLTVNGQKFHYQQVENSFTQPNAGISEKMLEWALDVTKEASGDLLEMYCGNGNFSIPLARRFDRVVATEISKVSVNSAQLNIAINGMHNVQVVKMASEDVSAALNGDVELPKSLVQAGVSELTPSVVLVDPPRAGLDDATVELIRKIDSILYISCNPETLKANLEALSNTHEVVRYAMFDQFPYTHHVETGVFLRRKAS.

S-adenosyl-L-methionine is bound by residues Gln-187, Tyr-215, Asn-220, Glu-236, and Asp-297. The Nucleophile role is filled by Cys-322. The Proton acceptor role is filled by Glu-356.

This sequence belongs to the class I-like SAM-binding methyltransferase superfamily. RNA M5U methyltransferase family. TrmA subfamily.

The catalysed reaction is uridine(54) in tRNA + S-adenosyl-L-methionine = 5-methyluridine(54) in tRNA + S-adenosyl-L-homocysteine + H(+). It catalyses the reaction uridine(341) in tmRNA + S-adenosyl-L-methionine = 5-methyluridine(341) in tmRNA + S-adenosyl-L-homocysteine + H(+). Functionally, dual-specificity methyltransferase that catalyzes the formation of 5-methyluridine at position 54 (m5U54) in all tRNAs, and that of position 341 (m5U341) in tmRNA (transfer-mRNA). The polypeptide is tRNA/tmRNA (uracil-C(5))-methyltransferase (Marinomonas sp. (strain MWYL1)).